The chain runs to 558 residues: Glucose-6-phosphate isomerase (558 aa).

Residue Ala2 is modified to N-acetylalanine. The residue at position 12 (Lys12) is an N6-acetyllysine. Position 34 is an N6-(2-hydroxyisobutyryl)lysine (Lys34). Residue Ser107 is modified to Phosphoserine. Thr109 carries the post-translational modification Phosphothreonine. Lys142 carries the post-translational modification N6-acetyllysine. Residue 159–160 (GS) coordinates D-glucose 6-phosphate. Ser185 is subject to Phosphoserine; by CK2. D-glucose 6-phosphate is bound at residue 210 to 215 (SKTFTT). Phosphothreonine is present on Thr250. Positions 354, 358, and 389 each coordinate D-glucose 6-phosphate. Glu358 (proton donor) is an active-site residue. His389 is an active-site residue. The residue at position 454 (Lys454) is an N6-acetyllysine; alternate. Residue Lys454 is modified to N6-malonyllysine; alternate. Lys454 carries the post-translational modification N6-succinyllysine; alternate. Ser455 carries the post-translational modification Phosphoserine. A D-glucose 6-phosphate-binding site is contributed by Lys519. The active site involves Lys519.

It belongs to the GPI family. Homodimer; in the catalytically active form. Monomer in the secreted form. Post-translationally, phosphorylation at Ser-185 by CK2 has been shown to decrease enzymatic activity and may contribute to secretion by a non-classical secretory pathway. ISGylated.

Its subcellular location is the cytoplasm. The protein localises to the secreted. It catalyses the reaction alpha-D-glucose 6-phosphate = beta-D-fructose 6-phosphate. It participates in carbohydrate degradation; glycolysis; D-glyceraldehyde 3-phosphate and glycerone phosphate from D-glucose: step 2/4. Strongly inhibited by erythrose 4-phosphate. In the cytoplasm, catalyzes the conversion of glucose-6-phosphate to fructose-6-phosphate, the second step in glycolysis, and the reverse reaction during gluconeogenesis. Besides it's role as a glycolytic enzyme, also acts as a secreted cytokine: acts as an angiogenic factor (AMF) that stimulates endothelial cell motility. Acts as a neurotrophic factor, neuroleukin, for spinal and sensory neurons. It is secreted by lectin-stimulated T-cells and induces immunoglobulin secretion. In Homo sapiens (Human), this protein is Glucose-6-phosphate isomerase.